Here is a 544-residue protein sequence, read N- to C-terminus: Membrane protein insertase YidC (544 aa).

A helical transmembrane segment spans residues 6–26 (NILLIGLLFVSFLLWQQWQAD). Residues 34–58 (AAQTQSSIPASTVADSHSSDVPDAD) are disordered. The span at 39 to 49 (SSIPASTVADS) shows a compositional bias: polar residues. A run of 4 helical transmembrane segments spans residues 345–365 (LLMF…LITL), 423–443 (GGCL…WVLL), 460–480 (LSVQ…MFVM), and 503–523 (VIFT…WLVG).

The protein belongs to the OXA1/ALB3/YidC family. Type 1 subfamily. As to quaternary structure, interacts with the Sec translocase complex via SecD. Specifically interacts with transmembrane segments of nascent integral membrane proteins during membrane integration.

The protein resides in the cell inner membrane. Functionally, required for the insertion and/or proper folding and/or complex formation of integral membrane proteins into the membrane. Involved in integration of membrane proteins that insert both dependently and independently of the Sec translocase complex, as well as at least some lipoproteins. Aids folding of multispanning membrane proteins. In Shewanella halifaxensis (strain HAW-EB4), this protein is Membrane protein insertase YidC.